Here is an 84-residue protein sequence, read N- to C-terminus: Large ribosomal subunit protein bL31B (84 aa).

The protein belongs to the bacterial ribosomal protein bL31 family. Type B subfamily. In terms of assembly, part of the 50S ribosomal subunit.

This chain is Large ribosomal subunit protein bL31B, found in Acinetobacter baumannii (strain AB307-0294).